The following is a 97-amino-acid chain: uncharacterized protein (97 aa).

The segment at 58 to 97 (SLLLPRTVQTGGTEREKPGPGQRKRGAHCSACKRSSTRPS) is disordered.

This is an uncharacterized protein from Homo sapiens (Human).